A 972-amino-acid chain; its full sequence is 116 kDa U5 small nuclear ribonucleoprotein component (972 aa).

M1 bears the N-acetylmethionine mark. The disordered stretch occupies residues 1–54; it reads MDTDLYDEFGNYIGPELDSDEDDDELGRETKDLDEMDDDDDDDDIGDHDDDHPG. Acidic residues-rich tracts occupy residues 17 to 26 and 34 to 48; these read LDSDEDDDEL and DEMD…IGDH. S19 is modified (phosphoserine). Residue K64 forms a Glycyl lysine isopeptide (Lys-Gly) (interchain with G-Cter in SUMO1); alternate linkage. A Glycyl lysine isopeptide (Lys-Gly) (interchain with G-Cter in SUMO2); alternate cross-link involves residue K64. At T86 the chain carries Phosphothreonine. The tr-type G domain maps to 127–409; that stretch reads ELIRNVTLCG…GIHLTKEELK (283 aa). Residues 136 to 143, 204 to 208, and 258 to 261 each bind GTP; these read GHLHHGKT, DTPGH, and NKID.

This sequence belongs to the TRAFAC class translation factor GTPase superfamily. Classic translation factor GTPase family. EF-G/EF-2 subfamily. In terms of assembly, component of the U5 snRNP and the U4/U6-U5 tri-snRNP complex, a building block of the spliceosome. The U4/U6-U5 tri-snRNP complex is composed of the U4, U6 and U5 snRNAs and at least PRPF3, PRPF4, PRPF6, PRPF8, PRPF31, SNRNP200, TXNL4A, SNRNP40, DDX23, CD2BP2, PPIH, SNU13, EFTUD2, SART1 and USP39. Component of the pre-catalytic, catalytic and post-catalytic spliceosome complexes. Component of the minor spliceosome, which splices U12-type introns. Within this complex, interacts with CRIPT. Interacts with ERBB4 and PRPF8. Interacts with PIH1D1. Interacts with RPAP3 and URI1 in a ZNHIT2-dependent manner. Interacts with NRDE2. Interacts with FAM50A. Interacts with UBL5.

Its subcellular location is the nucleus. Required for pre-mRNA splicing as component of the spliceosome, including pre-catalytic, catalytic and post-catalytic spliceosomal complexes. Component of the U5 snRNP and the U4/U6-U5 tri-snRNP complex, a building block of the spliceosome. As a component of the minor spliceosome, involved in the splicing of U12-type introns in pre-mRNAs. This is 116 kDa U5 small nuclear ribonucleoprotein component (EFTUD2) from Pongo abelii (Sumatran orangutan).